The sequence spans 317 residues: Glucokinase (317 aa).

This sequence belongs to the ROK (NagC/XylR) family. As to quaternary structure, homodimer. A divalent metal cation serves as cofactor.

It carries out the reaction D-glucose + ATP = D-glucose 6-phosphate + ADP + H(+). In terms of biological role, catalyzes the phosphorylation of D-glucose to D-glucose 6-phosphate using ATP as the phosphate donor. Can also phosphorylate 2-deoxyglucose, with lower efficiency. ITP can also serve as a phosphoryl donor. This is Glucokinase from Thermotoga maritima (strain ATCC 43589 / DSM 3109 / JCM 10099 / NBRC 100826 / MSB8).